The sequence spans 142 residues: Large ribosomal subunit protein uL13 (142 aa).

The protein belongs to the universal ribosomal protein uL13 family. Part of the 50S ribosomal subunit.

Its function is as follows. This protein is one of the early assembly proteins of the 50S ribosomal subunit, although it is not seen to bind rRNA by itself. It is important during the early stages of 50S assembly. The protein is Large ribosomal subunit protein uL13 of Caldicellulosiruptor bescii (strain ATCC BAA-1888 / DSM 6725 / KCTC 15123 / Z-1320) (Anaerocellum thermophilum).